The primary structure comprises 281 residues: MANLSGYNFAYLDEQTKRMIRRAILKAVAIPGYQVPFGGREMPMPYGWGTGGIQLTASVIGESDVLKVIDQGADDTTNAVSIRNFFKRVTGVNTTERTDDATVIQTRHRIPETPLTEDQIIIFQVPIPEPLRFIEPRETETRTMHALEEYGVMQVKLYEDIARFGHIATTYAYPVKVNGRYVMDPSPIPKFDNPKMDMMPALQLFGAGREKRIYAVPPFTRVESLDFDDHPFTVQQWDEPCAICGSTHSYLDEVVLDDAGNRMFVCSDTDYCRQQSEAKNQ.

The protein belongs to the PhnJ family. In terms of assembly, forms a complex with PhnG, PhnH, PhnI and PhnK with the suggested composition PhnG(4)H(2)I(2)J(2)K. [4Fe-4S] cluster is required as a cofactor.

The catalysed reaction is alpha-D-ribose 1-methylphosphonate 5-phosphate + AH2 + S-adenosyl-L-methionine = alpha-D-ribose 1,2-cyclic phosphate 5-phosphate + methane + 5'-deoxyadenosine + L-methionine + A + H(+). Catalyzes the breakage of the C-P bond in alpha-D-ribose 1-methylphosphonate 5-phosphate (PRPn) forming alpha-D-ribose 1,2-cyclic phosphate 5-phosphate (PRcP). This Escherichia coli (strain K12) protein is Alpha-D-ribose 1-methylphosphonate 5-phosphate C-P lyase (phnJ).